Here is a 453-residue protein sequence, read N- to C-terminus: tRNA modification GTPase MnmE (453 aa).

(6S)-5-formyl-5,6,7,8-tetrahydrofolate is bound by residues Arg-22, Glu-79, and Lys-119. The TrmE-type G domain occupies 215–376 (GMKVVIAGRP…LKQHLKSLMG (162 aa)). Asn-225 contributes to the K(+) binding site. GTP is bound by residues 225-230 (NAGKSS), 244-250 (TEIAGTT), 269-272 (DTAG), and 334-337 (NKAD). Ser-229 lines the Mg(2+) pocket. Thr-244, Ile-246, and Thr-249 together coordinate K(+). Mg(2+) is bound at residue Thr-250. Position 453 (Lys-453) interacts with (6S)-5-formyl-5,6,7,8-tetrahydrofolate.

This sequence belongs to the TRAFAC class TrmE-Era-EngA-EngB-Septin-like GTPase superfamily. TrmE GTPase family. In terms of assembly, homodimer. Heterotetramer of two MnmE and two MnmG subunits. Requires K(+) as cofactor.

It localises to the cytoplasm. Its function is as follows. Exhibits a very high intrinsic GTPase hydrolysis rate. Involved in the addition of a carboxymethylaminomethyl (cmnm) group at the wobble position (U34) of certain tRNAs, forming tRNA-cmnm(5)s(2)U34. The chain is tRNA modification GTPase MnmE from Shewanella frigidimarina (strain NCIMB 400).